A 349-amino-acid chain; its full sequence is N-acetyltaurine hydrolase (349 aa).

A divalent metal cation contacts are provided by His-26, His-28, Glu-169, His-201, His-230, and Asp-298.

Belongs to the metallo-dependent hydrolases superfamily. Phosphotriesterase family. A divalent metal cation serves as cofactor. In terms of tissue distribution, expressed primarily in proximal tubules of the kidney.

Its subcellular location is the cytoplasm. It localises to the cytosol. It carries out the reaction N-acetyltaurine + H2O = taurine + acetate. The enzyme catalyses N-propanoyltaurine + H2O = propanoate + taurine. The catalysed reaction is N-acetyl-L-methionine + H2O = L-methionine + acetate. It catalyses the reaction N-acetyl-L-isoleucine + H2O = L-isoleucine + acetate. It carries out the reaction N-acetyl-L-leucine + H2O = L-leucine + acetate. The enzyme catalyses N-acetyl-L-valine + H2O = L-valine + acetate. In terms of biological role, N-acetyltaurine hydrolase that regulates feeding by catalyzing the hydrolysis of N-acetyltaurine into taurine and acetate. N-acetyltaurine has anorexigenic and anti-obesity effects that are dependent on GFRAL receptor and GDF15. PTER also acts on other N-acetyl amino acids (Met, Ile, Leu, Val) and N-propionyltaurine, but at lower rates. Binds resiniferotoxin, a vanilloid that desensitizes nociceptive neurons. The polypeptide is N-acetyltaurine hydrolase (Rattus norvegicus (Rat)).